The chain runs to 543 residues: 2,3-bisphosphoglycerate-independent phosphoglycerate mutase (543 aa).

Mn(2+) contacts are provided by Asp-20 and Ser-73. Ser-73 acts as the Phosphoserine intermediate in catalysis. Residues His-134, 166 to 167 (RD), Arg-198, Arg-204, 278 to 281 (RGDR), and Lys-360 each bind substrate. The Mn(2+) site is built by Asp-428, His-432, Asp-469, His-470, and His-488.

The protein belongs to the BPG-independent phosphoglycerate mutase family. As to quaternary structure, monomer. The cofactor is Mn(2+).

It carries out the reaction (2R)-2-phosphoglycerate = (2R)-3-phosphoglycerate. It functions in the pathway carbohydrate degradation; glycolysis; pyruvate from D-glyceraldehyde 3-phosphate: step 3/5. Functionally, catalyzes the interconversion of 2-phosphoglycerate and 3-phosphoglycerate. The sequence is that of 2,3-bisphosphoglycerate-independent phosphoglycerate mutase from Rhodopirellula baltica (strain DSM 10527 / NCIMB 13988 / SH1).